A 143-amino-acid chain; its full sequence is Nucleoside diphosphate kinase (143 aa).

6 residues coordinate ATP: Lys11, Phe59, Arg87, Thr93, Arg104, and Asn114. The Pros-phosphohistidine intermediate role is filled by His117.

It belongs to the NDK family. In terms of assembly, homotetramer. The cofactor is Mg(2+).

The protein resides in the cytoplasm. The catalysed reaction is a 2'-deoxyribonucleoside 5'-diphosphate + ATP = a 2'-deoxyribonucleoside 5'-triphosphate + ADP. It catalyses the reaction a ribonucleoside 5'-diphosphate + ATP = a ribonucleoside 5'-triphosphate + ADP. Its function is as follows. Major role in the synthesis of nucleoside triphosphates other than ATP. The ATP gamma phosphate is transferred to the NDP beta phosphate via a ping-pong mechanism, using a phosphorylated active-site intermediate. The chain is Nucleoside diphosphate kinase from Alteromonas mediterranea (strain DSM 17117 / CIP 110805 / LMG 28347 / Deep ecotype).